The primary structure comprises 335 residues: NADP(+)-dependent glycerol-3-phosphate dehydrogenase (335 aa).

Sn-glycerol 3-phosphate is bound at residue Gly137. An NADPH-binding site is contributed by Ala141. Sn-glycerol 3-phosphate is bound by residues Lys192, Asp250, Arg259, and Asn260. Lys192 acts as the Proton acceptor in catalysis. Arg259 lines the NADPH pocket. Val287 and Glu289 together coordinate NADPH.

This sequence belongs to the NAD-dependent glycerol-3-phosphate dehydrogenase family. In terms of assembly, homodimer.

The protein resides in the cytoplasm. The enzyme catalyses sn-glycerol 3-phosphate + NADP(+) = dihydroxyacetone phosphate + NADPH + H(+). Catalyzes the reduction of the glycolytic intermediate dihydroxyacetone phosphate (DHAP) to sn-glycerol 3-phosphate (G3P). Shows a 15-fold preference for NADPH over NADH in the reduction process. Can also catalyze the reverse reaction in vitro. Shows no activity with dihydroxyacetone, glycerol, glycerol-2-phosphate, D-glyceraldehyde-3-phosphate, DL-glyceraldehyde, D-erythrose-4-phosphate, D-fructose-6-phosphate, beta-D-glucose-6-phosphate, or alpha-D-galactose-1-phosphate. The sequence is that of NADP(+)-dependent glycerol-3-phosphate dehydrogenase from Archaeoglobus fulgidus (strain ATCC 49558 / DSM 4304 / JCM 9628 / NBRC 100126 / VC-16).